We begin with the raw amino-acid sequence, 144 residues long: Large ribosomal subunit protein eL27 (144 aa).

The protein belongs to the eukaryotic ribosomal protein eL27 family.

The protein resides in the cytoplasm. In Tetrahymena thermophila, this protein is Large ribosomal subunit protein eL27 (RPL27).